An 833-amino-acid polypeptide reads, in one-letter code: Protein PAT1 homolog 1 (833 aa).

Disordered stretches follow at residues 279-313 (DMRE…MHGM), 398-427 (NIRQ…SGMP), and 492-549 (EEAT…DKKL). A compositionally biased stretch (low complexity) spans 303-313 (PSLSPGGMHGM). Polar residues predominate over residues 398 to 408 (NIRQNGPQFSH).

The protein belongs to the PAT1 family.

The protein resides in the cytoplasm. Its subcellular location is the P-body. In terms of biological role, RNA-binding protein involved in deadenylation-dependent decapping of mRNAs, leading to the degradation of mRNAs. Acts as a scaffold protein that connects deadenylation and decapping machinery. Required for the recruitment of P-body components such as cgh-1 in somatic blastomeres. May play a role in recruiting the decapping enzyme dcap-1 to cytoplasmic puncta in the cell body of the posterior touch receptor neuron, PLM. This is Protein PAT1 homolog 1 from Caenorhabditis elegans.